The following is a 529-amino-acid chain: Calcium/calmodulin-dependent protein kinase type II subunit gamma (529 aa).

The Protein kinase domain occupies 14-272 (YQLFEELGKG…ADQALKHPWV (259 aa)). ATP is bound by residues 20–28 (LGKGAFSVV) and Lys-43. Catalysis depends on Asp-136, which acts as the Proton acceptor. The interval 283–292 (HRQETVECLR) is autoinhibitory domain. 3 positions are modified to phosphothreonine; by autocatalysis: Thr-287, Thr-306, and Thr-307. The interval 294–316 (FNARRKLKGAILTTMLVSRNFSA) is calmodulin-binding. Ser-311, Ser-334, Ser-349, Ser-352, and Ser-455 each carry phosphoserine. The segment at 324–353 (KSDGGVKKRKSSSSVHLMPQSNNKNSLVSP) is disordered. A compositionally biased stretch (polar residues) spans 342–352 (PQSNNKNSLVS).

This sequence belongs to the protein kinase superfamily. CAMK Ser/Thr protein kinase family. CaMK subfamily. In terms of assembly, CAMK2 is composed of 4 different chains: alpha (CAMK2A), beta (CAMK2B), gamma (CAMK2G), and delta (CAMK2D). The different isoforms assemble into homo- or heteromultimeric holoenzymes composed of 12 subunits with two hexameric rings stacked one on top of the other. In terms of processing, autophosphorylation of Thr-287 following activation by Ca(2+)/calmodulin. Phosphorylation of Thr-287 locks the kinase into an activated state.

It localises to the sarcoplasmic reticulum membrane. The catalysed reaction is L-seryl-[protein] + ATP = O-phospho-L-seryl-[protein] + ADP + H(+). The enzyme catalyses L-threonyl-[protein] + ATP = O-phospho-L-threonyl-[protein] + ADP + H(+). Its activity is regulated as follows. Activated by Ca(2+)/calmodulin. Binding of calmodulin results in conformational change that relieves intrasteric autoinhibition and allows autophosphorylation of Thr-287 which turns the kinase in a constitutively active form and confers to the kinase a Ca(2+)-independent activity. Functionally, calcium/calmodulin-dependent protein kinase that functions autonomously after Ca(2+)/calmodulin-binding and autophosphorylation, and is involved in sarcoplasmic reticulum Ca(2+) transport in skeletal muscle and may function in dendritic spine and synapse formation and neuronal plasticity. In slow-twitch muscles, is involved in regulation of sarcoplasmic reticulum (SR) Ca(2+) transport and in fast-twitch muscle participates in the control of Ca(2+) release from the SR through phosphorylation of the ryanodine receptor-coupling factor triadin. In the central nervous system, it is involved in the regulation of neurite formation and arborization. It may participate in the promotion of dendritic spine and synapse formation and maintenance of synaptic plasticity which enables long-term potentiation (LTP) and hippocampus-dependent learning. In response to interferon-gamma (IFN-gamma) stimulation, catalyzes phosphorylation of STAT1, stimulating the JAK-STAT signaling pathway. The polypeptide is Calcium/calmodulin-dependent protein kinase type II subunit gamma (Camk2g) (Mus musculus (Mouse)).